We begin with the raw amino-acid sequence, 364 residues long: Carbamoyl phosphate synthase small chain (364 aa).

CPSase regions lie at residues 1–167 and 1–171; these read MKRQ…PSPG and MKRQ…RGER. L-glutamine is bound by residues Ser-45, Gly-219, and Gly-221. The Glutamine amidotransferase type-1 domain occupies 171–358; it reads RIVLIDFGMK…LALIREFNKK (188 aa). Cys-246 acts as the Nucleophile in catalysis. Residues Leu-247, Gln-250, Asn-288, Gly-290, and Tyr-291 each coordinate L-glutamine. Active-site residues include His-331 and Glu-333.

This sequence belongs to the CarA family. In terms of assembly, composed of two chains; the small (or glutamine) chain promotes the hydrolysis of glutamine to ammonia, which is used by the large (or ammonia) chain to synthesize carbamoyl phosphate. Tetramer of heterodimers (alpha,beta)4.

It catalyses the reaction hydrogencarbonate + L-glutamine + 2 ATP + H2O = carbamoyl phosphate + L-glutamate + 2 ADP + phosphate + 2 H(+). The catalysed reaction is L-glutamine + H2O = L-glutamate + NH4(+). Its pathway is amino-acid biosynthesis; L-arginine biosynthesis; carbamoyl phosphate from bicarbonate: step 1/1. It participates in pyrimidine metabolism; UMP biosynthesis via de novo pathway; (S)-dihydroorotate from bicarbonate: step 1/3. Functionally, small subunit of the glutamine-dependent carbamoyl phosphate synthetase (CPSase). CPSase catalyzes the formation of carbamoyl phosphate from the ammonia moiety of glutamine, carbonate, and phosphate donated by ATP, constituting the first step of 2 biosynthetic pathways, one leading to arginine and/or urea and the other to pyrimidine nucleotides. The small subunit (glutamine amidotransferase) binds and cleaves glutamine to supply the large subunit with the substrate ammonia. The protein is Carbamoyl phosphate synthase small chain of Bacillus caldolyticus.